Consider the following 174-residue polypeptide: Calcineurin subunit B (174 aa).

EF-hand domains are found at residues 21-56 (EEIE…SSNP), 60-88 (RLMD…FSGK), 90-125 (SKLD…MVGK), and 131-166 (ELQQ…KSVA). Ca(2+) contacts are provided by aspartate 34, aspartate 36, serine 38, threonine 40, glutamate 45, aspartate 66, aspartate 68, asparagine 70, threonine 72, glutamate 77, aspartate 103, aspartate 105, aspartate 107, tyrosine 109, glutamate 114, aspartate 144, aspartate 146, aspartate 148, arginine 150, and glutamate 155.

Belongs to the calcineurin regulatory subunit family. As to quaternary structure, composed of a catalytic subunit (A) and a regulatory subunit (B).

Functionally, regulatory subunit of calcineurin, a calcium-dependent, calmodulin stimulated protein phosphatase. Confers calcium sensitivity. The sequence is that of Calcineurin subunit B (CNB1) from Debaryomyces hansenii (strain ATCC 36239 / CBS 767 / BCRC 21394 / JCM 1990 / NBRC 0083 / IGC 2968) (Yeast).